The primary structure comprises 265 residues: Ribosomal RNA small subunit methyltransferase A (265 aa).

Residues Asn13, Leu15, Gly39, Glu59, Asp87, and Asn108 each contribute to the S-adenosyl-L-methionine site.

The protein belongs to the class I-like SAM-binding methyltransferase superfamily. rRNA adenine N(6)-methyltransferase family. RsmA subfamily.

The protein resides in the cytoplasm. The catalysed reaction is adenosine(1518)/adenosine(1519) in 16S rRNA + 4 S-adenosyl-L-methionine = N(6)-dimethyladenosine(1518)/N(6)-dimethyladenosine(1519) in 16S rRNA + 4 S-adenosyl-L-homocysteine + 4 H(+). Its function is as follows. Specifically dimethylates two adjacent adenosines (A1518 and A1519) in the loop of a conserved hairpin near the 3'-end of 16S rRNA in the 30S particle. May play a critical role in biogenesis of 30S subunits. The sequence is that of Ribosomal RNA small subunit methyltransferase A from Aliarcobacter butzleri (strain RM4018) (Arcobacter butzleri).